Here is a 115-residue protein sequence, read N- to C-terminus: Large ribosomal subunit protein eL30 (115 aa).

It belongs to the eukaryotic ribosomal protein eL30 family. In terms of assembly, component of the large ribosomal subunit.

It is found in the cytoplasm. In terms of biological role, component of the large ribosomal subunit. The ribosome is a large ribonucleoprotein complex responsible for the synthesis of proteins in the cell. The sequence is that of Large ribosomal subunit protein eL30 (RPL30) from Gallus gallus (Chicken).